Reading from the N-terminus, the 103-residue chain is Histone H4 (103 aa).

The segment covering 1–14 (MTGRGKGGKGLGKG) has biased composition (gly residues). The tract at residues 1 to 20 (MTGRGKGGKGLGKGGAKRHR) is disordered. Lysine 6 and lysine 13 each carry N6-acetyl-N6-methyllysine; alternate. A DNA-binding region spans residues 17 to 21 (KRHRK).

Belongs to the histone H4 family. As to quaternary structure, the nucleosome is a histone octamer containing two molecules each of H2A, H2B, H3 and H4 assembled in one H3-H4 heterotetramer and two H2A-H2B heterodimers. The octamer wraps approximately 147 bp of DNA.

The protein localises to the nucleus. It is found in the chromosome. Its function is as follows. Core component of nucleosome. Nucleosomes wrap and compact DNA into chromatin, limiting DNA accessibility to the cellular machineries which require DNA as a template. Histones thereby play a central role in transcription regulation, DNA repair, DNA replication and chromosomal stability. DNA accessibility is regulated via a complex set of post-translational modifications of histones, also called histone code, and nucleosome remodeling. In Diadromus pulchellus (Parasitic wasp), this protein is Histone H4.